A 433-amino-acid polypeptide reads, in one-letter code: Putative purine permease YbbY (433 aa).

Residues 1–17 are Periplasmic-facing; the sequence is MFNFAVSRESLLSGFQW. Residues 18–38 form a helical membrane-spanning segment; it reads FFFIFCNTVVVPPTLLSAFQL. At 39 to 42 the chain is on the cytoplasmic side; that stretch reads PQSS. A helical transmembrane segment spans residues 43–63; it reads LLTLTQYAFLATALACFAQAF. Over 64 to 68 the chain is Periplasmic; sequence CGHRR. A helical membrane pass occupies residues 69–89; the sequence is AIMEGPGGLWWGTILTITLGE. The Cytoplasmic portion of the chain corresponds to 90-102; the sequence is ASRGTPINDIATS. The helical transmembrane segment at 103-123 threads the bilayer; that stretch reads LAVGIALSGVLTMLIGFSGLG. The Periplasmic segment spans residues 124 to 130; that stretch reads HRLARLF. Residues 131 to 151 form a helical membrane-spanning segment; sequence TPSVMVLFMLMLGAQLTTIFF. Topologically, residues 152–169 are cytoplasmic; it reads KGMLGLPFGIADPNFKIQ. A helical transmembrane segment spans residues 170–190; the sequence is LPPFALSVAVMCLVLAMIIFL. The Periplasmic portion of the chain corresponds to 191–196; the sequence is PQRFAR. A helical membrane pass occupies residues 197 to 217; the sequence is YGLLVGTITGWLLWYFCFPSS. The Cytoplasmic portion of the chain corresponds to 218-230; the sequence is HSLSGELHWQWFP. Residues 231-251 form a helical membrane-spanning segment; it reads LGSGGALSPGIILTAVITGLV. The Periplasmic portion of the chain corresponds to 252 to 288; that stretch reads NISNTYGAIRGTDVFYPQQGAGNTRYRRSFVATGFMT. Residues 289-309 form a helical membrane-spanning segment; the sequence is LITVPLAVIPFSPFVSSIGLL. At 310–319 the chain is on the cytoplasmic side; the sequence is TQTGDYTRRS. The helical transmembrane segment at 320–340 threads the bilayer; the sequence is FIYGSVICLLVALVPALTRLF. Residues 341–345 are Periplasmic-facing; sequence CSIPL. The helical transmembrane segment at 346–366 threads the bilayer; sequence PVSSAVMLVSYLPLLFSALVF. Residues 367 to 379 are Cytoplasmic-facing; it reads SQQITFTARNIYR. A helical membrane pass occupies residues 380–400; it reads LALPLFVGIFLMALPPVYLQD. The Periplasmic segment spans residues 401-407; it reads LPLTLRP. Residues 408–428 traverse the membrane as a helical segment; that stretch reads LLSNGLLVGILLAVLMDNLIP. Residues 429–433 lie on the Cytoplasmic side of the membrane; sequence WERIE.

The protein belongs to the nucleobase:cation symporter-2 (NCS2) (TC 2.A.40) family.

It is found in the cell inner membrane. The protein is Putative purine permease YbbY (ybbY) of Escherichia coli (strain K12).